A 100-amino-acid chain; its full sequence is Insertion element IS600 uncharacterized 11 kDa protein (100 aa).

It belongs to the transposase 8 family.

The chain is Insertion element IS600 uncharacterized 11 kDa protein from Shigella sonnei.